The sequence spans 800 residues: Phenylalanine--tRNA ligase beta subunit (800 aa).

Residues 39-154 enclose the tRNA-binding domain; that stretch reads TKDIKKLVVG…EAVKPGTDAL (116 aa). Positions 408 to 483 constitute a B5 domain; the sequence is SFVTPIKITA…RIYGYDDIPS (76 aa). Residues aspartate 461, aspartate 467, glutamate 470, and glutamate 471 each contribute to the Mg(2+) site. An FDX-ACB domain is found at 708–800; it reads PRFPGVTRDI…ALKKHGAIIR (93 aa).

This sequence belongs to the phenylalanyl-tRNA synthetase beta subunit family. Type 1 subfamily. As to quaternary structure, tetramer of two alpha and two beta subunits. Mg(2+) serves as cofactor.

It is found in the cytoplasm. The enzyme catalyses tRNA(Phe) + L-phenylalanine + ATP = L-phenylalanyl-tRNA(Phe) + AMP + diphosphate + H(+). The sequence is that of Phenylalanine--tRNA ligase beta subunit from Staphylococcus epidermidis (strain ATCC 35984 / DSM 28319 / BCRC 17069 / CCUG 31568 / BM 3577 / RP62A).